The chain runs to 215 residues: Outer-membrane lipoprotein carrier protein (215 aa).

A signal peptide spans 1–24; the sequence is MFVLKARHLMAAGLVSLAAWSAGA.

This sequence belongs to the LolA family. In terms of assembly, monomer.

It localises to the periplasm. Participates in the translocation of lipoproteins from the inner membrane to the outer membrane. Only forms a complex with a lipoprotein if the residue after the N-terminal Cys is not an aspartate (The Asp acts as a targeting signal to indicate that the lipoprotein should stay in the inner membrane). This is Outer-membrane lipoprotein carrier protein from Ralstonia nicotianae (strain ATCC BAA-1114 / GMI1000) (Ralstonia solanacearum).